A 68-amino-acid chain; its full sequence is Alpha-conotoxin PIVA (68 aa).

Residues 1–16 form the signal peptide; it reads MFTVFLLVVLATTVVS. A propeptide spanning residues 17 to 41 is cleaved from the precursor; that stretch reads FTSDRASDDRNTNDKASRLLSHVVR. Intrachain disulfides connect Cys43-Cys57, Cys44-Cys52, and Cys55-Cys64. Pro48 and Pro54 each carry 4-hydroxyproline; partial. Pro61 is modified (4-hydroxyproline). At Gln66 the chain carries Glutamine amide.

This sequence belongs to the conotoxin A superfamily. As to expression, expressed by the venom duct.

The protein localises to the secreted. Functionally, alpha-conotoxins act on postsynaptic membranes, they bind to the nicotinic acetylcholine receptors (nAChR) and thus inhibit them. This toxin has higher affinity for the adult subtype (alpha-1-beta-1-gamma-delta (CHRNA1-CHRNB1-CHRNG-CHRND) subunits) (IC(50)=2.3 nM) of the receptor than for the fetal subtype (alpha-1-beta-1-epsilon-delta (CHRNA1-CHRNB1-CHRND-CHRNE) subunits) (IC(50)=22 nM). In Conus purpurascens (Purple cone), this protein is Alpha-conotoxin PIVA.